The primary structure comprises 334 residues: GTPase Obg (334 aa).

Residues 1 to 159 (MRFVDEVVIK…KEVRLELNLL (159 aa)) enclose the Obg domain. In terms of domain architecture, OBG-type G spans 160-331 (ADIALLGLPN…LAKKLNEFLH (172 aa)). GTP contacts are provided by residues 166 to 173 (GLPNAGKS), 191 to 195 (FTTMY), 212 to 215 (DIPG), 282 to 285 (NKID), and 312 to 314 (SAA). The Mg(2+) site is built by S173 and T193.

The protein belongs to the TRAFAC class OBG-HflX-like GTPase superfamily. OBG GTPase family. As to quaternary structure, monomer. It depends on Mg(2+) as a cofactor.

The protein resides in the cytoplasm. In terms of biological role, an essential GTPase which binds GTP, GDP and possibly (p)ppGpp with moderate affinity, with high nucleotide exchange rates and a fairly low GTP hydrolysis rate. Plays a role in control of the cell cycle, stress response, ribosome biogenesis and in those bacteria that undergo differentiation, in morphogenesis control. The sequence is that of GTPase Obg from Francisella philomiragia subsp. philomiragia (strain ATCC 25017 / CCUG 19701 / FSC 153 / O#319-036).